The following is a 307-amino-acid chain: uncharacterized protein (307 aa).

This is an uncharacterized protein from Caenorhabditis elegans.